An 86-amino-acid chain; its full sequence is UPF0291 protein LBA1279 (86 aa).

Composition is skewed to basic and acidic residues over residues methionine 1–glutamate 27 and asparagine 65–lysine 75. Disordered stretches follow at residues methionine 1 to glutamate 36 and asparagine 65 to aspartate 86. Positions glutamine 76–aspartate 86 are enriched in basic residues.

This sequence belongs to the UPF0291 family.

Its subcellular location is the cytoplasm. The chain is UPF0291 protein LBA1279 from Lactobacillus acidophilus (strain ATCC 700396 / NCK56 / N2 / NCFM).